The chain runs to 310 residues: DDRGK domain-containing protein 1 (310 aa).

A helical transmembrane segment spans residues 1-21 (MAAIIYLAIAAVASILLFVAV). Topologically, residues 22 to 310 (KLLSTDTKTE…DSPAEISVNA (289 aa)) are cytoplasmic. Disordered stretches follow at residues 38–85 (VGEL…DEYQ) and 110–162 (KAEK…LKEE). The segment covering 52–70 (PRARARRGLRNKTNRSKTQ) has biased composition (basic residues). The segment covering 76 to 85 (DYDDYDDEYQ) has biased composition (acidic residues).

Belongs to the DDRGK1 family.

It localises to the endoplasmic reticulum membrane. In terms of biological role, substrate adapter for ufmylation, the covalent attachment of the ubiquitin-like modifier UFM1 to substrate proteins. The chain is DDRGK domain-containing protein 1 from Trichoplax adhaerens (Trichoplax reptans).